The following is a 699-amino-acid chain: Polyribonucleotide nucleotidyltransferase (699 aa).

2 residues coordinate Mg(2+): Asp-485 and Asp-491. The region spanning Pro-552–Ile-611 is the KH domain. One can recognise an S1 motif domain in the interval Gly-621–Lys-689.

It belongs to the polyribonucleotide nucleotidyltransferase family. Component of the RNA degradosome, which is a multiprotein complex involved in RNA processing and mRNA degradation. Mg(2+) is required as a cofactor.

It is found in the cytoplasm. The enzyme catalyses RNA(n+1) + phosphate = RNA(n) + a ribonucleoside 5'-diphosphate. Involved in mRNA degradation. Catalyzes the phosphorolysis of single-stranded polyribonucleotides processively in the 3'- to 5'-direction. The chain is Polyribonucleotide nucleotidyltransferase from Shewanella sp. (strain MR-7).